Reading from the N-terminus, the 132-residue chain is Small ribosomal subunit protein uS8 (132 aa).

It belongs to the universal ribosomal protein uS8 family. As to quaternary structure, part of the 30S ribosomal subunit. Contacts proteins S5 and S12.

Its function is as follows. One of the primary rRNA binding proteins, it binds directly to 16S rRNA central domain where it helps coordinate assembly of the platform of the 30S subunit. The chain is Small ribosomal subunit protein uS8 from Borrelia hermsii (strain HS1 / DAH).